A 143-amino-acid polypeptide reads, in one-letter code: Heat shock protein Hsp-16.41 (143 aa).

The 106-residue stretch at 35-140 folds into the sHSP domain; the sequence is HNSFNFSDNI…SSRSIPINFV (106 aa).

The protein belongs to the small heat shock protein (HSP20) family.

This Caenorhabditis elegans protein is Heat shock protein Hsp-16.41 (hsp-16.41).